Consider the following 423-residue polypeptide: MLQLIKGFKDILPGEADRWRRIETLAAVTFGAFGFSEIRPPVMERTELFKRSIGEDTDIVEKEMYTFEDRGGDLVTLRPEATASVVRAYIQHKLYADTPVAKLYTIGPMFRRERPQKGRYRQFHQINAEAFGVAAPYMDAQLIFMLMILFSALGLKDTRVHINSLGCAQCRPAFKQRLLSFLEGRKADLCEDCTRRIDRNPLRVLDCKVDRCRHVSAEAPQITDFLCPGCAAHFDEVTGLLTDLGVGFDIDKRLVRGLDYYTRTTFEVQTDRLGAQSAIAGGGRYDDLVKLLGGPDQPAVGFAVGLERLVELVAMEETVSDVAHLRLFIAALGERARRRAFGWMCELNRRGFDVEMSLEERGLKSQMKTADKWNASHVLIVGDAEMETGSLILRNMKTKAQQEIPLGDVPGALITMMDNRQEN.

This sequence belongs to the class-II aminoacyl-tRNA synthetase family. In terms of assembly, homodimer.

It is found in the cytoplasm. The catalysed reaction is tRNA(His) + L-histidine + ATP = L-histidyl-tRNA(His) + AMP + diphosphate + H(+). The protein is Histidine--tRNA ligase of Desulfosudis oleivorans (strain DSM 6200 / JCM 39069 / Hxd3) (Desulfococcus oleovorans).